The chain runs to 134 residues: MWSDPVADMLTRIRNANSVFKESVEIPASNLKKDILEIMKKEGFINDYKFIDDGKQGILKVYLKYKGTRRDKKPIMEGIIRVSKSGRRVYVNTRNIPKVKGGLGIAILSTSQGVMTDKEAREKKVGGEVICYVW.

It belongs to the universal ribosomal protein uS8 family. In terms of assembly, part of the 30S ribosomal subunit. Contacts proteins S5 and S12.

One of the primary rRNA binding proteins, it binds directly to 16S rRNA central domain where it helps coordinate assembly of the platform of the 30S subunit. This chain is Small ribosomal subunit protein uS8, found in Petrotoga mobilis (strain DSM 10674 / SJ95).